The chain runs to 713 residues: Metal transporter CNNM3 (713 aa).

A helical membrane pass occupies residues 7-29; the sequence is AVVGWLGWVLAAFCLGSTAGEAA. A glycan (N-linked (GlcNAc...) asparagine) is linked at Asn-73. One can recognise a CNNM transmembrane domain in the interval 136 to 314; that stretch reads EAAPPWALGL…DPYSDLSKGV (179 aa). Helical transmembrane passes span 137–157, 199–219, 227–247, and 267–287; these read AAPPWALGLGAAGLLALAAVA, CALGALLLLASLAQAALAVLL, AVPAVLGCAGLVFLVGEVLPA, and LAVLLTLPVALPVGQLLELAA. 2 CBS domains span residues 324–385 and 392–458; these read LTPL…CTPL and YNHP…ILDE. Residues 664–713 are disordered; it reads LPPSPENAELQAIPGSQTRLLGDKSRETAGSTNSRPSIPVEESPGRNPGV. Phosphoserine is present on residues Ser-667 and Ser-706.

It belongs to the ACDP family. As to expression, widely expressed with highest levels in brain, kidney, liver, lung and heart.

It localises to the cell membrane. Probable metal transporter. The sequence is that of Metal transporter CNNM3 (Cnnm3) from Mus musculus (Mouse).